The sequence spans 764 residues: Phosphoribosylformylglycinamidine synthase subunit PurL (764 aa).

Histidine 57 is an active-site residue. ATP-binding residues include tyrosine 60 and lysine 104. Residue glutamate 106 coordinates Mg(2+). Residues 107–110 and arginine 129 contribute to the substrate site; that span reads SHNH. The active-site Proton acceptor is the histidine 108. Aspartate 130 provides a ligand contact to Mg(2+). Residue glutamine 258 coordinates substrate. Aspartate 286 is a Mg(2+) binding site. 330–332 provides a ligand contact to substrate; it reads ESQ. Positions 518 and 555 each coordinate ATP. Asparagine 556 contributes to the Mg(2+) binding site. Residue serine 558 coordinates substrate.

It belongs to the FGAMS family. Monomer. Part of the FGAM synthase complex composed of 1 PurL, 1 PurQ and 2 PurS subunits.

Its subcellular location is the cytoplasm. The enzyme catalyses N(2)-formyl-N(1)-(5-phospho-beta-D-ribosyl)glycinamide + L-glutamine + ATP + H2O = 2-formamido-N(1)-(5-O-phospho-beta-D-ribosyl)acetamidine + L-glutamate + ADP + phosphate + H(+). It functions in the pathway purine metabolism; IMP biosynthesis via de novo pathway; 5-amino-1-(5-phospho-D-ribosyl)imidazole from N(2)-formyl-N(1)-(5-phospho-D-ribosyl)glycinamide: step 1/2. In terms of biological role, part of the phosphoribosylformylglycinamidine synthase complex involved in the purines biosynthetic pathway. Catalyzes the ATP-dependent conversion of formylglycinamide ribonucleotide (FGAR) and glutamine to yield formylglycinamidine ribonucleotide (FGAM) and glutamate. The FGAM synthase complex is composed of three subunits. PurQ produces an ammonia molecule by converting glutamine to glutamate. PurL transfers the ammonia molecule to FGAR to form FGAM in an ATP-dependent manner. PurS interacts with PurQ and PurL and is thought to assist in the transfer of the ammonia molecule from PurQ to PurL. The chain is Phosphoribosylformylglycinamidine synthase subunit PurL from Nocardia farcinica (strain IFM 10152).